A 307-amino-acid polypeptide reads, in one-letter code: Phosphonates import ATP-binding protein PhnC (307 aa).

The region spanning 4–252 (IRIERLSKTF…RLHALYGDDA (249 aa)) is the ABC transporter domain. Residue 37-44 (GASGSGKS) participates in ATP binding. Positions 265–275 (AAREAAGEPAR) are enriched in basic and acidic residues. The segment at 265–307 (AAREAAGEPARRAPAAFDSAGSPDLPDSQPASPRRMLAASSMR) is disordered.

This sequence belongs to the ABC transporter superfamily. Phosphonates importer (TC 3.A.1.9.1) family. As to quaternary structure, the complex is composed of two ATP-binding proteins (PhnC), two transmembrane proteins (PhnE) and a solute-binding protein (PhnD).

Its subcellular location is the cell inner membrane. The catalysed reaction is phosphonate(out) + ATP + H2O = phosphonate(in) + ADP + phosphate + H(+). Part of the ABC transporter complex PhnCDE involved in phosphonates import. Responsible for energy coupling to the transport system. The chain is Phosphonates import ATP-binding protein PhnC from Burkholderia pseudomallei (strain 1710b).